We begin with the raw amino-acid sequence, 463 residues long: Chromosomal replication initiator protein DnaA (463 aa).

The domain I, interacts with DnaA modulators stretch occupies residues 1–84 (MNTNQIILTN…QLFQHYNNAI (84 aa)). The interval 84-124 (IKTVEIITKELPASNQATLELPTKTFADIGSSELNSENIFS) is domain II. A domain III, AAA+ region region spans residues 125–343 (TFDIRFTFDN…GALNKVIAHS (219 aa)). ATP-binding residues include G171, G173, K174, and T175. Positions 344-463 (NFTAKEITLE…INLMMKILQN (120 aa)) are domain IV, binds dsDNA.

Belongs to the DnaA family. As to quaternary structure, oligomerizes as a right-handed, spiral filament on DNA at oriC.

It is found in the cytoplasm. In terms of biological role, plays an essential role in the initiation and regulation of chromosomal replication. ATP-DnaA binds to the origin of replication (oriC) to initiate formation of the DNA replication initiation complex once per cell cycle. Binds the DnaA box (a 9 base pair repeat at the origin) and separates the double-stranded (ds)DNA. Forms a right-handed helical filament on oriC DNA; dsDNA binds to the exterior of the filament while single-stranded (ss)DNA is stabiized in the filament's interior. The ATP-DnaA-oriC complex binds and stabilizes one strand of the AT-rich DNA unwinding element (DUE), permitting loading of DNA polymerase. After initiation quickly degrades to an ADP-DnaA complex that is not apt for DNA replication. Binds acidic phospholipids. The protein is Chromosomal replication initiator protein DnaA of Rickettsia bellii (strain OSU 85-389).